The sequence spans 303 residues: Vacuolar protein sorting-associated protein 26B (303 aa).

It belongs to the VPS26 family. Component of the retromer complex which consists of VPS29 (MAG1), VPS26 (VPS26A or VPS26B), VPS35 (VPS35A or VPS35B or VPS35C), VPS5/17 (SNX1 or SNX2A or SNX2B). Component of a retromer subcomplex consisting of VPS29 (MAG1), VPS26 (VPS26A or VPS26B), VPS35 (VPS35A or VPS35B or VPS35C).

It is found in the cytoplasm. It localises to the endosome membrane. The protein resides in the prevacuolar compartment membrane. The protein localises to the golgi apparatus. Its subcellular location is the trans-Golgi network membrane. Plays a role in vesicular protein sorting. Component of the membrane-associated retromer complex which is essential in endosome-to-Golgi retrograde transport. The VPS29-VPS26-VPS35 subcomplex may be involved in recycling of specific cargos from endosome to the plasma membrane. This chain is Vacuolar protein sorting-associated protein 26B (VPS26B), found in Arabidopsis thaliana (Mouse-ear cress).